Here is a 348-residue protein sequence, read N- to C-terminus: Endoglucanase-6B (348 aa).

Residues Trp52 and Ser54 each coordinate substrate. Residues Asp92 and Asp139 each act as proton donor in the active site. The substrate site is built by Asn183, Trp186, Asn222, Trp282, Lys310, and Glu314. Residues 222–241 (NYNPYSTSNPPPYTSGSPSP) show a composition bias toward low complexity. Residues 222-244 (NYNPYSTSNPPPYTSGSPSPDES) form a disordered region.

The protein belongs to the glycosyl hydrolase 6 (cellulase B) family. As to quaternary structure, monomer.

It catalyses the reaction Endohydrolysis of (1-&gt;4)-beta-D-glucosidic linkages in cellulose, lichenin and cereal beta-D-glucans.. Functionally, plays a central role in the recycling of plant biomass. The biological conversion of cellulose to glucose generally requires three types of hydrolytic enzymes: (1) Endoglucanases which cut internal beta-1,4-glucosidic bonds; (2) Exocellobiohydrolases that cut the disaccharide cellobiose from the non-reducing end of the cellulose polymer chain; (3) Beta-1,4-glucosidases which hydrolyze the cellobiose and other short cello-oligosaccharides to glucose. This chain is Endoglucanase-6B, found in Humicola insolens (Soft-rot fungus).